Consider the following 178-residue polypeptide: uncharacterized protein (178 aa).

It belongs to the mimivirus L114/R131 family.

This is an uncharacterized protein from Acanthamoeba polyphaga mimivirus (APMV).